Reading from the N-terminus, the 449-residue chain is Glucose-6-phosphate isomerase (449 aa).

The active-site Proton donor is Glu-291. Residues His-312 and Lys-426 contribute to the active site.

This sequence belongs to the GPI family.

It localises to the cytoplasm. It carries out the reaction alpha-D-glucose 6-phosphate = beta-D-fructose 6-phosphate. It participates in carbohydrate biosynthesis; gluconeogenesis. Its pathway is carbohydrate degradation; glycolysis; D-glyceraldehyde 3-phosphate and glycerone phosphate from D-glucose: step 2/4. Functionally, catalyzes the reversible isomerization of glucose-6-phosphate to fructose-6-phosphate. This Streptococcus pyogenes serotype M3 (strain ATCC BAA-595 / MGAS315) protein is Glucose-6-phosphate isomerase.